A 404-amino-acid chain; its full sequence is Glucose-1-phosphate adenylyltransferase 2 (404 aa).

Residues Y97, G162, 177–178, and S195 contribute to the alpha-D-glucose 1-phosphate site; that span reads EK.

It belongs to the bacterial/plant glucose-1-phosphate adenylyltransferase family. As to quaternary structure, homotetramer.

It carries out the reaction alpha-D-glucose 1-phosphate + ATP + H(+) = ADP-alpha-D-glucose + diphosphate. The protein operates within glycan biosynthesis; glycogen biosynthesis. Functionally, involved in the biosynthesis of ADP-glucose, a building block required for the elongation reactions to produce glycogen. Catalyzes the reaction between ATP and alpha-D-glucose 1-phosphate (G1P) to produce pyrophosphate and ADP-Glc. This Vibrio vulnificus (strain YJ016) protein is Glucose-1-phosphate adenylyltransferase 2.